A 148-amino-acid polypeptide reads, in one-letter code: uncharacterized protein (148 aa).

This is an uncharacterized protein from Acanthamoeba polyphaga mimivirus (APMV).